A 321-amino-acid chain; its full sequence is Phospholipid phosphatase-related protein type 5 (321 aa).

Transmembrane regions (helical) follow at residues 6–26 (VALI…TVML), 62–82 (AVPP…VIIV), 122–142 (FLGI…AGQV), 196–213 (AALS…ITST), 225–245 (VLCL…VAEY), and 252–272 (VIAG…CVVN).

It belongs to the PA-phosphatase related phosphoesterase family.

The protein localises to the cell membrane. Induces filopodia formation and promotes neurite growth in a CDC42-independent manner; impedes neurite growth inhibitory-mediated axonal retraction. The polypeptide is Phospholipid phosphatase-related protein type 5 (Mus musculus (Mouse)).